Reading from the N-terminus, the 318-residue chain is Beta-sarcoglycan (318 aa).

Residues 1 to 32 form a disordered region; it reads MAAAAAAAAEQQSSNGPVKKSMREKAVERRNV. Over 1–65 the chain is Cytoplasmic; that stretch reads MAAAAAAAAE…GLRGRKGNLA (65 aa). Residues 21–32 show a composition bias toward basic and acidic residues; sequence SMREKAVERRNV. The chain crosses the membrane as a helical; Signal-anchor for type II membrane protein span at residues 66–86; the sequence is ICVIVLLFLLAVINLIITLVI. Residues 87–318 are Extracellular-facing; sequence WAVIRIGPNG…VSDNPCGNTH (232 aa). Residues N158, N211, and N258 are each glycosylated (N-linked (GlcNAc...) asparagine). 2 disulfides stabilise this stretch: C288/C314 and C290/C307.

The protein belongs to the sarcoglycan beta/delta/gamma/zeta family. As to quaternary structure, cross-link to form 2 major subcomplexes: one consisting of SGCB, SGCD and SGCG and the other consisting of SGCB and SGCD. The association between SGCB and SGCG is particularly strong while SGCA is loosely associated with the other sarcoglycans. Disulfide bonds are present.

The protein resides in the cell membrane. It localises to the sarcolemma. The protein localises to the cytoplasm. Its subcellular location is the cytoskeleton. Functionally, component of the sarcoglycan complex, a subcomplex of the dystrophin-glycoprotein complex which forms a link between the F-actin cytoskeleton and the extracellular matrix. In Oryctolagus cuniculus (Rabbit), this protein is Beta-sarcoglycan (SGCB).